Here is a 430-residue protein sequence, read N- to C-terminus: Ribosomal protein uS12 methylthiotransferase RimO (430 aa).

The MTTase N-terminal domain maps to 2–119; that stretch reads ISVYSISLGC…WPAMLAHALK (118 aa). [4Fe-4S] cluster is bound by residues C11, C46, C81, C145, C149, and C152. Residues 131 to 361 form the Radical SAM core domain; the sequence is STGPSYAWLK…MEVQAEISEE (231 aa). A TRAM domain is found at 364–430; sequence AVHEGTRQQV…TRTYDLVALA (67 aa).

Belongs to the methylthiotransferase family. RimO subfamily. [4Fe-4S] cluster is required as a cofactor.

It is found in the cytoplasm. It catalyses the reaction L-aspartate(89)-[ribosomal protein uS12]-hydrogen + (sulfur carrier)-SH + AH2 + 2 S-adenosyl-L-methionine = 3-methylsulfanyl-L-aspartate(89)-[ribosomal protein uS12]-hydrogen + (sulfur carrier)-H + 5'-deoxyadenosine + L-methionine + A + S-adenosyl-L-homocysteine + 2 H(+). Functionally, catalyzes the methylthiolation of an aspartic acid residue of ribosomal protein uS12. This is Ribosomal protein uS12 methylthiotransferase RimO from Nitratidesulfovibrio vulgaris (strain ATCC 29579 / DSM 644 / CCUG 34227 / NCIMB 8303 / VKM B-1760 / Hildenborough) (Desulfovibrio vulgaris).